We begin with the raw amino-acid sequence, 2293 residues long: Protein Ycf2 (2293 aa).

1642–1649 contributes to the ATP binding site; sequence GSIGTGRS.

Belongs to the Ycf2 family.

Its subcellular location is the plastid. The protein localises to the chloroplast stroma. Functionally, probable ATPase of unknown function. Its presence in a non-photosynthetic plant (Epifagus virginiana) and experiments in tobacco indicate that it has an essential function which is probably not related to photosynthesis. The sequence is that of Protein Ycf2 from Platanus occidentalis (Sycamore).